We begin with the raw amino-acid sequence, 78 residues long: Large ribosomal subunit protein bL28 (78 aa).

Residues 1–23 (MSRVCQVTGKRPMVGNNRSHAKN) are disordered.

This sequence belongs to the bacterial ribosomal protein bL28 family.

This chain is Large ribosomal subunit protein bL28, found in Shewanella pealeana (strain ATCC 700345 / ANG-SQ1).